The sequence spans 184 residues: Photosystem I assembly protein Ycf4 (184 aa).

A run of 2 helical transmembrane segments spans residues 22 to 42 (FFWA…GTSS) and 57 to 77 (ISFF…LFIS).

This sequence belongs to the Ycf4 family.

It is found in the plastid. The protein resides in the chloroplast thylakoid membrane. Functionally, seems to be required for the assembly of the photosystem I complex. The chain is Photosystem I assembly protein Ycf4 from Lemna minor (Common duckweed).